Reading from the N-terminus, the 207-residue chain is Germin-like protein 1 (207 aa).

A signal peptide spans 1–17; it reads MLRIIFLLSLLFALSND. A disulfide bridge connects residues cysteine 23 and cysteine 38. Residues 51–197 enclose the Cupin type-1 domain; the sequence is FSLGTPGNTT…TTFLPPATVK (147 aa). A glycan (N-linked (GlcNAc...) asparagine) is linked at asparagine 58. 4 residues coordinate Mn(2+): histidine 99, histidine 101, glutamate 106, and histidine 145.

This sequence belongs to the germin family. Oligomer (believed to be a pentamer but probably hexamer).

The protein resides in the secreted. It localises to the extracellular space. Its subcellular location is the apoplast. In terms of biological role, may play a role in plant defense. Probably has no oxalate oxidase activity even if the active site is conserved. This is Germin-like protein 1 (GER1) from Brassica napus (Rape).